Consider the following 280-residue polypeptide: Lysosome-associated membrane glycoprotein 5 (280 aa).

An N-terminal signal peptide occupies residues M1–A29. The Extracellular portion of the chain corresponds to E30 to E235. N-linked (GlcNAc...) asparagine glycans are attached at residues N35, N53, N102, and N127. A helical membrane pass occupies residues T236–Y256. Residues H257 to G280 are Cytoplasmic-facing.

This sequence belongs to the LAMP family. Glycosylated. In brain, strongly expressed in the globus pallidus/ventral pallidum complex, the substantia nigra pars reticulata and the entopeduncular nucleus (at protein level). Expressed in the external plexiform layer of the olfactory bulb (at protein level). May be weakly expressed in neocortex and striatum (at protein level). Highly expressed in brain; not detected in other tissues tested. Detected in the cingulate cortex, cortical plate and caudate putamen. In neocortex, specifically expressed in neurons of layers II/III and V.

The protein resides in the cytoplasmic vesicle membrane. It is found in the cell membrane. The protein localises to the cell projection. Its subcellular location is the dendrite. It localises to the cytoplasmic vesicle. The protein resides in the secretory vesicle. It is found in the synaptic vesicle membrane. The protein localises to the growth cone membrane. Its subcellular location is the early endosome membrane. It localises to the recycling endosome. The protein resides in the endoplasmic reticulum-Golgi intermediate compartment membrane. It is found in the endosome membrane. Plays a role in short-term synaptic plasticity in a subset of GABAergic neurons in the brain. The chain is Lysosome-associated membrane glycoprotein 5 (Lamp5) from Mus musculus (Mouse).